We begin with the raw amino-acid sequence, 525 residues long: MNEIDEKNQAPVQQECLKEMIQNGHARRMGSVEDLYVALNRQNLYRNFCTYGELSDYCTRDQLTLALREICLKNPTLLHIVLPTRWPNHENYYRSSEYYSRPHPVHDYISVLQELKLSGVVLNEQPEYSAVMKQILEEFKNSKGSYTAKIFKLTTTLTIPYFGPTGPSWRLICLPEEHTEKWKKFIFVSNHCMSDGRSSIHFFHDLRDELNNIKTPPKKLDYIFKYEEDYQLLRKLPEPIEKVIDFRPPYLFIPKSLLSGFIYNHLRFSSKGVCMRMDDVEKTDDVVTEIINISPTEFQAIKANIKSNIQGKCTITPFLHVCWFVSLHKWGKFFKPLNFEWLTDIFIPADCRSQLPDDDEMRQMYRYGANVGFIDFTPWISEFDMNDNKENFWPLIEHYHEVISEALRNKKHLHGLGFNIQGFVQKYVNIDKVMCDRAIGKRRGGTLLSNVGLFNQLEEPDAKYSICDLAFGQFQGSWHQAFSLGVCSTNVKGMNIVVASTKNVVGSQESLEELCSIYKALLLGP.

The tract at residues 24–41 (GHARRMGSVEDLYVALNR) is membrane association. Active-site charge relay system residues include histidine 191 and aspartate 195. The segment at 508–525 (QESLEELCSIYKALLLGP) is membrane association.

The protein belongs to the ATF1 alcohol acetyltransferase family.

Its subcellular location is the lipid droplet. It is found in the endoplasmic reticulum membrane. It catalyses the reaction an aliphatic alcohol + acetyl-CoA = an acetyl ester + CoA. The catalysed reaction is a fatty acyl-CoA + H2O = a fatty acid + CoA + H(+). The enzyme catalyses 3-methylbutanol + acetyl-CoA = 3-methylbutyl acetate + CoA. Found to be inhibited by cadmium, copper, zinc and mercurium divalent cations and sulfhydryl reagents. Inhibited by the addition of unsaturated fatty acids to the culture. Its function is as follows. Major alcohol O-acetyltransferase that uses acetyl-CoA to synthesize acetate esters from various alcohols, producing ethyl acetate, isoamyl acetate, isobutyl acetate, butyl acetate, hexyl acetate, heptyl acetate and octyl acetate. The alcohol acyltransferase activity is promiscuous with regard to alcohol but relatively specific for acetyl-CoA since ATF1 does not use any other acyl-CoAs (C3, C4, C5, C6, C8, C10, C12). Acts also as an efficient thioesterase in vitro with specificity towards medium-chain-length acyl-CoAs. In natural environments, the production of aromatic volatile metabolites promotes dispersal through insect vectors. The protein is Alcohol O-acetyltransferase 1 of Saccharomyces cerevisiae (strain ATCC 204508 / S288c) (Baker's yeast).